The primary structure comprises 409 residues: Torsin-4A (409 aa).

Over residues Met-1–Lys-16 the composition is skewed to basic and acidic residues. Disordered regions lie at residues Met-1–Gln-28 and Asp-75–Val-99. Residues Glu-17–Gln-28 are compositionally biased toward polar residues. Residues Pro-88–Arg-98 are compositionally biased toward basic residues. The chain crosses the membrane as a helical span at residues Cys-120 to Ile-136. Residue Gly-192 to Ser-199 coordinates ATP.

The protein belongs to the ClpA/ClpB family. Torsin subfamily.

It localises to the membrane. This chain is Torsin-4A (tor4a), found in Danio rerio (Zebrafish).